A 196-amino-acid polypeptide reads, in one-letter code: ATP-dependent Clp protease proteolytic subunit (196 aa).

The active-site Nucleophile is Ser96. Residue His121 is part of the active site.

The protein belongs to the peptidase S14 family. As to quaternary structure, fourteen ClpP subunits assemble into 2 heptameric rings which stack back to back to give a disk-like structure with a central cavity, resembling the structure of eukaryotic proteasomes.

It is found in the cytoplasm. The enzyme catalyses Hydrolysis of proteins to small peptides in the presence of ATP and magnesium. alpha-casein is the usual test substrate. In the absence of ATP, only oligopeptides shorter than five residues are hydrolyzed (such as succinyl-Leu-Tyr-|-NHMec, and Leu-Tyr-Leu-|-Tyr-Trp, in which cleavage of the -Tyr-|-Leu- and -Tyr-|-Trp bonds also occurs).. Cleaves peptides in various proteins in a process that requires ATP hydrolysis. Has a chymotrypsin-like activity. Plays a major role in the degradation of misfolded proteins. This chain is ATP-dependent Clp protease proteolytic subunit, found in Streptococcus agalactiae serotype III (strain NEM316).